Consider the following 231-residue polypeptide: Large ribosomal subunit protein uL1 (231 aa).

Belongs to the universal ribosomal protein uL1 family. As to quaternary structure, part of the 50S ribosomal subunit.

In terms of biological role, binds directly to 23S rRNA. The L1 stalk is quite mobile in the ribosome, and is involved in E site tRNA release. Protein L1 is also a translational repressor protein, it controls the translation of the L11 operon by binding to its mRNA. This chain is Large ribosomal subunit protein uL1, found in Staphylococcus haemolyticus (strain JCSC1435).